A 27-amino-acid polypeptide reads, in one-letter code: Omega-conotoxin RVIA (27 aa).

3 disulfide bridges follow: C1/C16, C8/C19, and C15/C26. 4-hydroxyproline occurs at positions 4 and 7.

The protein belongs to the conotoxin O1 superfamily. As to expression, expressed by the venom duct.

The protein localises to the secreted. In terms of biological role, omega-conotoxins act at presynaptic membranes, they bind and block voltage-gated calcium channels (Cav). This chain is Omega-conotoxin RVIA, found in Conus radiatus (Rayed cone).